Here is a 409-residue protein sequence, read N- to C-terminus: Arginine deiminase (409 aa).

The active-site Amidino-cysteine intermediate is the cysteine 398.

The protein belongs to the arginine deiminase family.

It localises to the cytoplasm. It catalyses the reaction L-arginine + H2O = L-citrulline + NH4(+). It functions in the pathway amino-acid degradation; L-arginine degradation via ADI pathway; carbamoyl phosphate from L-arginine: step 1/2. The protein is Arginine deiminase of Metamycoplasma arthritidis (strain 158L3-1) (Mycoplasma arthritidis).